Reading from the N-terminus, the 286-residue chain is ATP phosphoribosyltransferase (286 aa).

The protein belongs to the ATP phosphoribosyltransferase family. Long subfamily. Mg(2+) is required as a cofactor.

It localises to the cytoplasm. It carries out the reaction 1-(5-phospho-beta-D-ribosyl)-ATP + diphosphate = 5-phospho-alpha-D-ribose 1-diphosphate + ATP. Its pathway is amino-acid biosynthesis; L-histidine biosynthesis; L-histidine from 5-phospho-alpha-D-ribose 1-diphosphate: step 1/9. With respect to regulation, feedback inhibited by histidine. Catalyzes the condensation of ATP and 5-phosphoribose 1-diphosphate to form N'-(5'-phosphoribosyl)-ATP (PR-ATP). Has a crucial role in the pathway because the rate of histidine biosynthesis seems to be controlled primarily by regulation of HisG enzymatic activity. This chain is ATP phosphoribosyltransferase, found in Cytophaga hutchinsonii (strain ATCC 33406 / DSM 1761 / CIP 103989 / NBRC 15051 / NCIMB 9469 / D465).